A 432-amino-acid polypeptide reads, in one-letter code: Glutamyl-tRNA reductase (432 aa).

Residues 55 to 58, serine 114, 119 to 121, and glutamine 125 contribute to the substrate site; these read TCNR and ETQ. Cysteine 56 functions as the Nucleophile in the catalytic mechanism. 194 to 199 is an NADP(+) binding site; that stretch reads GAGEMI.

This sequence belongs to the glutamyl-tRNA reductase family. In terms of assembly, homodimer.

It carries out the reaction (S)-4-amino-5-oxopentanoate + tRNA(Glu) + NADP(+) = L-glutamyl-tRNA(Glu) + NADPH + H(+). It participates in porphyrin-containing compound metabolism; protoporphyrin-IX biosynthesis; 5-aminolevulinate from L-glutamyl-tRNA(Glu): step 1/2. Catalyzes the NADPH-dependent reduction of glutamyl-tRNA(Glu) to glutamate 1-semialdehyde (GSA). The protein is Glutamyl-tRNA reductase of Burkholderia ambifaria (strain ATCC BAA-244 / DSM 16087 / CCUG 44356 / LMG 19182 / AMMD) (Burkholderia cepacia (strain AMMD)).